Here is a 436-residue protein sequence, read N- to C-terminus: Gamma-glutamyl phosphate reductase (436 aa).

It belongs to the gamma-glutamyl phosphate reductase family.

It is found in the cytoplasm. The enzyme catalyses L-glutamate 5-semialdehyde + phosphate + NADP(+) = L-glutamyl 5-phosphate + NADPH + H(+). Its pathway is amino-acid biosynthesis; L-proline biosynthesis; L-glutamate 5-semialdehyde from L-glutamate: step 2/2. Functionally, catalyzes the NADPH-dependent reduction of L-glutamate 5-phosphate into L-glutamate 5-semialdehyde and phosphate. The product spontaneously undergoes cyclization to form 1-pyrroline-5-carboxylate. This chain is Gamma-glutamyl phosphate reductase, found in Polaromonas sp. (strain JS666 / ATCC BAA-500).